Here is a 1048-residue protein sequence, read N- to C-terminus: Pleckstrin homology domain-containing family A member 6 (1048 aa).

Polar residues predominate over residues 1–22 (MSNKTGGKRPATTNSDIPNHNM). A disordered region spans residues 1-36 (MSNKTGGKRPATTNSDIPNHNMVSEVPPERPSVRAT). Positions 59 to 158 (PVTKAGWLFK…WIQAMGEAAR (100 aa)) constitute a PH domain. 2 disordered regions span residues 165–318 (QKSV…MNQL) and 448–467 (SLQPRSHSVPRSPSQGSYSR). Residues 201-233 (PEPEAKTRGEGDGRGCEKAERRPERPEVKKEPP) show a composition bias toward basic and acidic residues. Phosphoserine occurs at positions 247 and 251. The span at 267 to 290 (AQPNGWQYHSPSRPGSTAFPSQDG) shows a compositional bias: polar residues. 4 positions are modified to phosphoserine: Ser314, Ser459, Ser461, and Ser472. The segment covering 456 to 465 (VPRSPSQGSY) has biased composition (polar residues). Tyr492 is modified (phosphotyrosine). The residue at position 591 (Ser591) is a Phosphoserine. Positions 663–746 (RKNNPSRGTD…HQTLPLDTPR (84 aa)) are disordered. Residues 687–711 (SSNSPASPLSSASLTSPLSPFSLVS) show a composition bias toward low complexity. Residues 712-721 (GSQGSPTKPG) show a composition bias toward polar residues. Residue Thr744 is modified to Phosphothreonine. Ser777 bears the Phosphoserine mark. At Thr784 the chain carries Phosphothreonine. Residues 793–858 (ASGLTNGLSS…PAPDPSPRPA (66 aa)) form a disordered region. Positions 794-803 (SGLTNGLSSQ) are enriched in polar residues. Ser801 is subject to Phosphoserine. Residues 815–827 (GKVKMSVEEQIDR) are compositionally biased toward basic and acidic residues. Positions 828–842 (MRRHQSGSMREKRRS) are enriched in basic residues. Residues Ser848, Ser854, and Ser867 each carry the phosphoserine modification. Thr920 carries the phosphothreonine modification. Ser940 carries the phosphoserine modification. 2 disordered regions span residues 968–989 (PIGEGDSVDVPQDSESQLQEQE) and 1005–1048 (RGRM…TMRV). At Thr1015 the chain carries Phosphothreonine. The span at 1016 to 1030 (PSPPTSPASPAPPAN) shows a compositional bias: pro residues. Ser1017 is subject to Phosphoserine. Residue Thr1020 is modified to Phosphothreonine. Phosphoserine occurs at positions 1021 and 1024.

As to expression, highly expressed in heart, kidney and throughout the brain.

This Homo sapiens (Human) protein is Pleckstrin homology domain-containing family A member 6 (PLEKHA6).